The following is a 1159-amino-acid chain: ABC transporter G family member 24 (1159 aa).

The next 2 membrane-spanning stretches (helical) occupy residues 11–31 (FNSI…GNNC) and 415–435 (VGSG…FLIF). One can recognise an ABC transporter domain in the interval 454-707 (LSFHNISCYV…FIKQKIAGMT (254 aa)). ATP is bound at residue 497 to 504 (GLSGSGKT). Residues 752–846 (QSTSPALSSN…DNNNKNNDDD (95 aa)) form a disordered region. Low complexity-rich tracts occupy residues 759–768 (SSNSNNSDIN) and 775–784 (INNPHNQNIH). Positions 785–795 (HQQHHHHHRHI) are enriched in basic residues. A compositionally biased stretch (low complexity) spans 822 to 841 (DNINNNNNNNKVKNNDNNNK). In terms of domain architecture, ABC transmembrane type-2 spans 902 to 1154 (FLLRTTYFVH…LLAYVFLRFL (253 aa)). 6 consecutive transmembrane segments (helical) span residues 909 to 929 (FVHI…PANL), 937 to 957 (FGAM…SLDL), 1005 to 1025 (YMIG…SLVL), 1047 to 1067 (ANMV…FLLA), 1074 to 1094 (YLIG…PVVN), and 1135 to 1155 (VLLG…RFLV).

The protein belongs to the ABC transporter superfamily. ABCG family. Eye pigment precursor importer (TC 3.A.1.204) subfamily.

Its subcellular location is the membrane. This is ABC transporter G family member 24 (abcG24) from Dictyostelium discoideum (Social amoeba).